The primary structure comprises 161 residues: Large ribosomal subunit protein uL10 (161 aa).

The protein belongs to the universal ribosomal protein uL10 family. In terms of assembly, part of the ribosomal stalk of the 50S ribosomal subunit. The N-terminus interacts with L11 and the large rRNA to form the base of the stalk. The C-terminus forms an elongated spine to which L12 dimers bind in a sequential fashion forming a multimeric L10(L12)X complex.

Its function is as follows. Forms part of the ribosomal stalk, playing a central role in the interaction of the ribosome with GTP-bound translation factors. This is Large ribosomal subunit protein uL10 from Buchnera aphidicola subsp. Cinara cedri (strain Cc).